The sequence spans 419 residues: Tyrosine--tRNA ligase 1 (419 aa).

Tyr-35 lines the L-tyrosine pocket. The 'HIGH' region signature appears at 40 to 49; that stretch reads PTAGSLHIGH. The L-tyrosine site is built by Tyr-172 and Gln-176. A 'KMSKS' region motif is present at residues 232–236; that stretch reads KFGKT. Lys-235 is a binding site for ATP. The 66-residue stretch at 353 to 418 folds into the S4 RNA-binding domain; that stretch reads QDLVELLIES…KKHFCLVKRA (66 aa).

Belongs to the class-I aminoacyl-tRNA synthetase family. TyrS type 1 subfamily. Homodimer.

It localises to the cytoplasm. It catalyses the reaction tRNA(Tyr) + L-tyrosine + ATP = L-tyrosyl-tRNA(Tyr) + AMP + diphosphate + H(+). Catalyzes the attachment of tyrosine to tRNA(Tyr) in a two-step reaction: tyrosine is first activated by ATP to form Tyr-AMP and then transferred to the acceptor end of tRNA(Tyr). The chain is Tyrosine--tRNA ligase 1 from Vibrio parahaemolyticus serotype O3:K6 (strain RIMD 2210633).